A 922-amino-acid chain; its full sequence is MHWLASATQTSASIVSSSLLSAVDVSSSLTMSEYFQNTSLPGTANSRQFSLPVVSNAAFLTGSISNFSRASAPAISSAWLQPSASGTSFQPLMGSAYLYQHSSTTMLSGVTGQSHICTSAASYPGVFEWDSTASTVKKSSSLRDFTVTVIDQNTAVSSMSMTAQYYKTSDTNTMVPLYPSLSASLVQGTLTQIPNQQGHNLSLPCQIGSQVYYYNQGTLGPQLSCLQSYGSVSYTGYRASAHQPEMVMVLKEVQPTNVLPPVSTSGMYYSVSSQPITETSVQVMETSLGMDTSLGLQSPSQTFCLPQTPEFSKSFSSRNTQTLESNPSPELGDISITPVQSPTNLLTLSPAPSQEKNENENLDEIKTNLSKPLDVHQILIGNQDPPLLPVEIPDIHPLLACIDPLGQEEQPGSENANLRNKSLSLEDQGIFENGIESSSDLADITTWVEDTYLPPIFSSLQDLDQPESPSAKKAKDTSAIKVNQVQEKSCVIKGHSDQVRKNKHKASEPIQGAPKAKIQPKNPECLLEREVVVGSATVSNSASVNKAKHSSNKPHKAASSRISKTKSHGQEKTKGNRKNSSKKSEESKQSGKKVKVEEKQTIPNMKRKKNQPELSQKTLKKPRSSLGMHMLESVQVFHALGKKIDMKTGFSSSRTLGSSSNTQNRQPFPALKPWLDIQHEGKGPEKIQVKAQKLDGSAEKECTSPSHSELPPPGKVKLIPLPFLTLDQPQARHVSRRPNPLASRRPAVAYPARPDSTNSAQSNAVNPSRPAPTNTSLTGPATPAQPISAKATQPSSANPTQPTVPQSAASRPSAYKTSSCSSLQREPVSTAVTSLRSLPKPQNQFLIQDFSLQPRPWRKPTVPEPVMSTPITEEQRPEREAMKRKAQQERENAAKYTSLGKVQFFIERERDMEIAEYYGYTI.

5 disordered regions span residues 459-522 (SLQD…QPKN), 539-627 (SNSA…SSLG), 649-668 (GFSS…RQPF), 692-835 (QKLD…VTSL), and 856-879 (PWRK…RPER). The span at 546 to 567 (KAKHSSNKPHKAASSRISKTKS) shows a compositional bias: basic residues. The segment covering 582 to 600 (KKSEESKQSGKKVKVEEKQ) has biased composition (basic and acidic residues). A compositionally biased stretch (low complexity) spans 651–660 (SSSRTLGSSS). A compositionally biased stretch (basic and acidic residues) spans 692-702 (QKLDGSAEKEC). Composition is skewed to polar residues over residues 755-779 (DSTN…SLTG) and 790-824 (KATQ…SSLQ). A coiled-coil region spans residues 872-899 (TEEQRPEREAMKRKAQQERENAAKYTSL).

This is an uncharacterized protein from Homo sapiens (Human).